Consider the following 648-residue polypeptide: MTPLLELKDIRRSYPAGDEQVEVLKGITLDIYAGEMVAIVGASGSGKSTLMNILGCLDKATSGTYRVAGQDVATLDADALAQLRREHFGFIFQRYHLLSHLTAEQNVEVPAVYAGLERKQRLLRAQELLQRLGLEDRTEYYPAQLSGGQQQRVSIARALMNGGQVILADEPTGALDSHSGEEVMAILHQLRDRGHMVIIVTHDPQVAAQAERVIEIRDGEIVRNPPAIEKVNVAGGTEPVVNTVSGWRQFVSGFNEALTMAWRALAANKMRTLLTMLGIIIGIASVVSIVVVGDAAKQMVLADIRSIGTNTIDVYPGKDFGDDDPQYQQALKYDDLIAIQKQPWVASATPAVSQNLRLRYNNVDVAASANGVSGDYFNVYGMTFSEGNTFNQEQLNGRAQVVVLDSNTRRQLFPHKADVVGEVILVGNMPARVIGVAEEKQSMFGSSKVLRVWLPYSTMSGRVMGQSWLNSITVRVKEGFDSAEAEQQLTRLLSLRHGKKDFFTWNMDGVLKTVEKTTRTLQLFLTLVAVISLVVGGIGVMNIMLVSVTERTREIGIRMAVGARASDVLQQFLIEAVLVCLVGGALGITLSLLIAFTLQLFLPGWEIGFSPLALLLAFLCSTATGILFGWLPARNAARLDPVDALVRE.

Residues 5–243 (LELKDIRRSY…AGGTEPVVNT (239 aa)) enclose the ABC transporter domain. 41 to 48 (GASGSGKS) is an ATP binding site. The next 4 membrane-spanning stretches (helical) occupy residues 273–293 (LLTMLGIIIGIASVVSIVVVG), 523–543 (LFLTLVAVISLVVGGIGVMNI), 576–596 (AVLVCLVGGALGITLSLLIAF), and 600–620 (LFLPGWEIGFSPLALLLAFLC).

The protein belongs to the ABC transporter superfamily. Macrolide exporter (TC 3.A.1.122) family. As to quaternary structure, homodimer. Part of the tripartite efflux system MacAB-TolC, which is composed of an inner membrane transporter, MacB, a periplasmic membrane fusion protein, MacA, and an outer membrane component, TolC. The complex forms a large protein conduit and can translocate molecules across both the inner and outer membranes. Interacts with MacA.

The protein resides in the cell inner membrane. Its function is as follows. Part of the tripartite efflux system MacAB-TolC. MacB is a non-canonical ABC transporter that contains transmembrane domains (TMD), which form a pore in the inner membrane, and an ATP-binding domain (NBD), which is responsible for energy generation. Confers resistance against macrolides. The polypeptide is Macrolide export ATP-binding/permease protein MacB (Shigella boydii serotype 4 (strain Sb227)).